A 331-amino-acid polypeptide reads, in one-letter code: Probable allantoicase (331 aa).

This sequence belongs to the allantoicase family.

It catalyses the reaction allantoate + H2O = (S)-ureidoglycolate + urea. Its pathway is nitrogen metabolism; (S)-allantoin degradation; (S)-ureidoglycolate from allantoate (aminidohydrolase route): step 1/1. The sequence is that of Probable allantoicase from Pseudomonas fluorescens (strain ATCC BAA-477 / NRRL B-23932 / Pf-5).